The chain runs to 275 residues: Coagulation factor IX (275 aa).

Tyr-23 bears the Sulfotyrosine mark. An N-linked (GlcNAc...) asparagine glycan is attached at Asn-25. Thr-27 is modified (phosphothreonine). A glycan (N-linked (GlcNAc...) asparagine) is linked at Asn-35. O-linked (GalNAc...) threonine glycosylation occurs at Thr-47. One can recognise a Peptidase S1 domain in the interval 49–275 (IVGGENAKPG…YTRVSWYVNW (227 aa)). Residues Cys-74 and Cys-90 are joined by a disulfide bond. Residue His-89 is the Charge relay system of the active site. Asn-96 carries an N-linked (GlcNAc...) asparagine glycan. The Ca(2+) site is built by Glu-103, Asn-105, Glu-108, Glu-110, and Glu-113. An N-linked (GlcNAc...) asparagine glycan is attached at Asn-128. Residue Asp-137 is the Charge relay system of the active site. 2 cysteine pairs are disulfide-bonded: Cys-204–Cys-218 and Cys-229–Cys-257. Catalysis depends on Ser-233, which acts as the Charge relay system.

This sequence belongs to the peptidase S1 family. In terms of assembly, heterodimer of a light chain and a heavy chain; disulfide-linked. Interacts (inactive and activated) with F11 (activated) in calcium-dependent manner. Interacts with SERPINC1. Post-translationally, activated by factor XIa, which excises the activation peptide. The propeptide can also be removed by snake venom protease. Activated by coagulation factor VIIa-tissue factor (F7-F3) complex in calcium-dependent manner.

It localises to the secreted. It catalyses the reaction Selective cleavage of Arg-|-Ile bond in factor X to form factor Xa.. In terms of biological role, factor IX is a vitamin K-dependent plasma protein that participates in the intrinsic pathway of blood coagulation by converting factor X to its active form in the presence of Ca(2+) ions, phospholipids, and factor VIIIa. This is Coagulation factor IX (F9) from Oryctolagus cuniculus (Rabbit).